Here is a 163-residue protein sequence, read N- to C-terminus: Phosphopantetheine adenylyltransferase (163 aa).

Thr9 serves as a coordination point for substrate. ATP contacts are provided by residues 9 to 10 and His17; that span reads TF. Substrate contacts are provided by Lys41, Leu76, and Arg90. ATP contacts are provided by residues 91 to 93, Glu101, and 126 to 132; these read GLR and YSFISST.

This sequence belongs to the bacterial CoaD family. Homohexamer. Mg(2+) serves as cofactor.

Its subcellular location is the cytoplasm. The catalysed reaction is (R)-4'-phosphopantetheine + ATP + H(+) = 3'-dephospho-CoA + diphosphate. The protein operates within cofactor biosynthesis; coenzyme A biosynthesis; CoA from (R)-pantothenate: step 4/5. Functionally, reversibly transfers an adenylyl group from ATP to 4'-phosphopantetheine, yielding dephospho-CoA (dPCoA) and pyrophosphate. The sequence is that of Phosphopantetheine adenylyltransferase from Dichelobacter nodosus (strain VCS1703A).